A 178-amino-acid polypeptide reads, in one-letter code: Large ribosomal subunit protein bL35m (178 aa).

This sequence belongs to the bacterial ribosomal protein bL35 family.

It localises to the mitochondrion. The polypeptide is Large ribosomal subunit protein bL35m (mRpL35) (Drosophila melanogaster (Fruit fly)).